A 185-amino-acid chain; its full sequence is Ribosome-recycling factor (185 aa).

Belongs to the RRF family.

It is found in the cytoplasm. In terms of biological role, responsible for the release of ribosomes from messenger RNA at the termination of protein biosynthesis. May increase the efficiency of translation by recycling ribosomes from one round of translation to another. This is Ribosome-recycling factor from Bacillus licheniformis (strain ATCC 14580 / DSM 13 / JCM 2505 / CCUG 7422 / NBRC 12200 / NCIMB 9375 / NCTC 10341 / NRRL NRS-1264 / Gibson 46).